A 355-amino-acid chain; its full sequence is DnaJ homolog dnj-20 (355 aa).

A signal peptide spans 1 to 21 (MRILNVSLLVLASSLVAFVEC). The J domain occupies 24–89 (DFYKILGVAK…EKRAMYDRHG (66 aa)).

This is DnaJ homolog dnj-20 from Caenorhabditis elegans.